Reading from the N-terminus, the 291-residue chain is Bis(5'-nucleosyl)-tetraphosphatase, symmetrical (291 aa).

This sequence belongs to the Ap4A hydrolase family.

The catalysed reaction is P(1),P(4)-bis(5'-adenosyl) tetraphosphate + H2O = 2 ADP + 2 H(+). Hydrolyzes diadenosine 5',5'''-P1,P4-tetraphosphate to yield ADP. This chain is Bis(5'-nucleosyl)-tetraphosphatase, symmetrical, found in Coxiella burnetii (strain Dugway 5J108-111).